Consider the following 294-residue polypeptide: tRNA dimethylallyltransferase (294 aa).

10 to 17 (GPTAVGKT) is a binding site for ATP. 12 to 17 (TAVGKT) serves as a coordination point for substrate. The segment at 35-38 (DSQQ) is interaction with substrate tRNA.

Belongs to the IPP transferase family. Monomer. It depends on Mg(2+) as a cofactor.

It carries out the reaction adenosine(37) in tRNA + dimethylallyl diphosphate = N(6)-dimethylallyladenosine(37) in tRNA + diphosphate. In terms of biological role, catalyzes the transfer of a dimethylallyl group onto the adenine at position 37 in tRNAs that read codons beginning with uridine, leading to the formation of N6-(dimethylallyl)adenosine (i(6)A). The sequence is that of tRNA dimethylallyltransferase from Streptococcus pneumoniae (strain ATCC 700669 / Spain 23F-1).